A 356-amino-acid chain; its full sequence is Peptide chain release factor 1 (356 aa).

The residue at position 233 (Gln233) is an N5-methylglutamine.

It belongs to the prokaryotic/mitochondrial release factor family. Methylated by PrmC. Methylation increases the termination efficiency of RF1.

The protein localises to the cytoplasm. Functionally, peptide chain release factor 1 directs the termination of translation in response to the peptide chain termination codons UAG and UAA. In Shouchella clausii (strain KSM-K16) (Alkalihalobacillus clausii), this protein is Peptide chain release factor 1.